The primary structure comprises 62 residues: Photosystem II reaction center protein Z (62 aa).

2 helical membrane passes run Ala-8 to Ala-28 and Phe-41 to Ile-61.

Belongs to the PsbZ family. PSII is composed of 1 copy each of membrane proteins PsbA, PsbB, PsbC, PsbD, PsbE, PsbF, PsbH, PsbI, PsbJ, PsbK, PsbL, PsbM, PsbT, PsbY, PsbZ, Psb30/Ycf12, at least 3 peripheral proteins of the oxygen-evolving complex and a large number of cofactors. It forms dimeric complexes.

The protein resides in the plastid. It is found in the chloroplast thylakoid membrane. Its function is as follows. May control the interaction of photosystem II (PSII) cores with the light-harvesting antenna, regulates electron flow through the 2 photosystem reaction centers. PSII is a light-driven water plastoquinone oxidoreductase, using light energy to abstract electrons from H(2)O, generating a proton gradient subsequently used for ATP formation. The chain is Photosystem II reaction center protein Z from Citrus sinensis (Sweet orange).